Reading from the N-terminus, the 908-residue chain is 26S proteasome non-ATPase regulatory subunit 2 (908 aa).

M1 is modified (N-acetylmethionine). Positions 1–51 are disordered; that stretch reads MEEGGRDKTPVQSQQPSATTPSGADEKSSGKERRDAGEKDKEQELSEEDKQ. 2 positions are modified to phosphothreonine: T9 and T20. Residues 10–22 show a composition bias toward polar residues; it reads PVQSQQPSATTPS. Over residues 24–51 the composition is skewed to basic and acidic residues; that stretch reads ADEKSSGKERRDAGEKDKEQELSEEDKQ. 2 positions are modified to phosphoserine: S29 and S147. Y194 carries the phosphotyrosine modification. A phosphoserine mark is found at S361 and S363. PC repeat units follow at residues 409–442, 443–479, 480–514, 517–551, and 560–589; these read SAAA…YIKS, GALL…TMRL, GSIF…SMEV, VTAL…TELK, and LGLG…PFRS. K551 carries the post-translational modification N6-acetyllysine. Basic and acidic residues predominate over residues 623–643; that stretch reads KEKEEDKDKKEKKDKDKKEAP. Residues 623-645 are disordered; the sequence is KEKEEDKDKKEKKDKDKKEAPAD. PC repeat units follow at residues 692 to 723 and 742 to 757; these read LALA…EVSY and AAML…KDPN. A required for interaction with UBLCP1 region spans residues 708-903; that stretch reads DTLSKFSHDA…LEGFVILRKN (196 aa).

The protein belongs to the proteasome subunit S2 family. In terms of assembly, component of the 19S proteasome regulatory particle complex. The 26S proteasome consists of a 20S core particle (CP) and two 19S regulatory subunits (RP). The regulatory particle is made of a lid composed of 9 subunits, a base containing 6 ATPases and few additional components including PSMD2. Interacts with RPGRIP1L. Interacts with CRY1 in a KDM8-dependent manner. Interacts (via C-terminus) with phosphatase UBLCP1 (via ubiquitin-like domain); the interaction recruits UBLCP1 to the 19S regulatory particle where it dephosphorylates 19S subunit PSMC2/RPT1 which impairs PSMC2 ATPase activity and disrupts 26S proteasome assembly.

In terms of biological role, component of the 26S proteasome, a multiprotein complex involved in the ATP-dependent degradation of ubiquitinated proteins. This complex plays a key role in the maintenance of protein homeostasis by removing misfolded or damaged proteins, which could impair cellular functions, and by removing proteins whose functions are no longer required. Therefore, the proteasome participates in numerous cellular processes, including cell cycle progression, apoptosis, or DNA damage repair. Functionally, binds to the intracellular domain of tumor necrosis factor type 1 receptor. The binding domain of TRAP1 and TRAP2 resides outside the death domain of TNFR1. The protein is 26S proteasome non-ATPase regulatory subunit 2 (Psmd2) of Mus musculus (Mouse).